Consider the following 678-residue polypeptide: ERAD-associated E3 ubiquitin-protein ligase component HRD3A (678 aa).

Residues 1–25 form the signal peptide; it reads MRILSYGIVILSLLVFSFIEFGVHA. The tract at residues 40 to 71 is disordered; it reads GGDDNGVGESSDFDEFGESEPKSEEELDPGSW. Sel1-like repeat units follow at residues 124–159, 242–277, 279–313, 317–349, 353–386, 388–422, 506–537, and 540–568; these read PHAQ…AGGN, ANAM…VDKG, PRSM…AKEG, AFNG…AVDN, SGHY…ANAG, PKAF…AERG, AALL…AKSQ, and AQAM…RYYD. Asn298 and Asn335 each carry an N-linked (GlcNAc...) asparagine glycan. The chain crosses the membrane as a helical span at residues 620 to 640; it reads VVFEEGNATILTLFVCLITIL.

Belongs to the sel-1 family. In terms of assembly, interacts with OS9.

The protein localises to the endoplasmic reticulum membrane. Functionally, component of the endoplasmic reticulum (ER) quality control system called ER-associated degradation (ERAD) and involved in ubiquitin-dependent degradation of misfolded endoplasmic reticulum proteins. Functions as an ERAD substrate-recruiting factor that recognizes misfolded proteins for the HRD1 E3 ubiquitin ligase complex. Targets the misfolded LRR receptor kinase BRI1. The sequence is that of ERAD-associated E3 ubiquitin-protein ligase component HRD3A from Arabidopsis thaliana (Mouse-ear cress).